The following is a 241-amino-acid chain: MELATEPIEGVLLVDKPQGRTSFSLIRSLVRLIGVKKIGHAGTLDPFATGVMVMLIGRKFTRLSDIMLFEDKEYSAVAHLGTTTDTYDCDGKIVGRSKKVPTMEEVLECTSYFQGEIQQVPPMFSAKKVQGKKLYEYARQGLSIERSFATVRVDLRLIKYEYPRLHFVVKCSKGTYIRSIAHELGNMLGCGAYLEELRRLRSGNFSIDQCIDGNHLDEPGFDVFPHLRDANGLILQPTPVL.

Aspartate 45 acts as the Nucleophile in catalysis.

It belongs to the pseudouridine synthase TruB family. Type 1 subfamily.

It carries out the reaction uridine(55) in tRNA = pseudouridine(55) in tRNA. Functionally, responsible for synthesis of pseudouridine from uracil-55 in the psi GC loop of transfer RNAs. The polypeptide is tRNA pseudouridine synthase B (Chlamydia muridarum (strain MoPn / Nigg)).